A 151-amino-acid polypeptide reads, in one-letter code: MKVIFTQDVRGRGKRGQVKEVPDGYAQNYLIKRGLAKVATKGNMNTLKRVEANEKAAYEAEKAEAEKIKAELEKDDTIVNFKSKAGTDSRLFGSISSKKIVEGLEKQYGIKVDKRKLNLPEPIKTLGYTNVHAKLFKGVEATIRVHVTEQD.

Belongs to the bacterial ribosomal protein bL9 family.

Its function is as follows. Binds to the 23S rRNA. In Lactobacillus helveticus (strain DPC 4571), this protein is Large ribosomal subunit protein bL9.